The primary structure comprises 254 residues: Proteasome subunit alpha (254 aa).

Residues 232–254 (PEVDSSESSNEAEAGAEKGSGES) are disordered.

Belongs to the peptidase T1A family. The 20S proteasome core is composed of 14 alpha and 14 beta subunits that assemble into four stacked heptameric rings, resulting in a barrel-shaped structure. The two inner rings, each composed of seven catalytic beta subunits, are sandwiched by two outer rings, each composed of seven alpha subunits. The catalytic chamber with the active sites is on the inside of the barrel. Has a gated structure, the ends of the cylinder being occluded by the N-termini of the alpha-subunits. Is capped by the proteasome-associated ATPase, ARC.

It localises to the cytoplasm. It functions in the pathway protein degradation; proteasomal Pup-dependent pathway. Its activity is regulated as follows. The formation of the proteasomal ATPase ARC-20S proteasome complex, likely via the docking of the C-termini of ARC into the intersubunit pockets in the alpha-rings, may trigger opening of the gate for substrate entry. Interconversion between the open-gate and close-gate conformations leads to a dynamic regulation of the 20S proteasome proteolysis activity. Functionally, component of the proteasome core, a large protease complex with broad specificity involved in protein degradation. The polypeptide is Proteasome subunit alpha (Mycolicibacterium vanbaalenii (strain DSM 7251 / JCM 13017 / BCRC 16820 / KCTC 9966 / NRRL B-24157 / PYR-1) (Mycobacterium vanbaalenii)).